The sequence spans 575 residues: Malto-oligosyltrehalose trehalohydrolase (575 aa).

Substrate is bound at residue 248 to 253 (RLDAVH). Catalysis depends on Asp-250, which acts as the Nucleophile. Glu-287 acts as the Proton donor in catalysis. Substrate is bound by residues 312-316 (DDVHH) and 381-386 (HDQVGN).

This sequence belongs to the glycosyl hydrolase 13 family.

The protein localises to the cytoplasm. The catalysed reaction is hydrolysis of (1-&gt;4)-alpha-D-glucosidic linkage in 4-alpha-D-[(1-&gt;4)-alpha-D-glucanosyl]n trehalose to yield trehalose and (1-&gt;4)-alpha-D-glucan.. It functions in the pathway glycan biosynthesis; trehalose biosynthesis. This Arthrobacter ramosus protein is Malto-oligosyltrehalose trehalohydrolase (treZ).